We begin with the raw amino-acid sequence, 191 residues long: MDMIGMASPAESPGGGGTARPSRYESQKRRDWQTFGQYLRNHRPPLELSRCSGAHVLEFLRYLDQFGKTKVHAHGCPFFGHPSPPAPCPCPLRQAWGSLDALVGRLRAAFEEHGGRPESNPFGARAVRLYLRDIRDTQSKARGIAYEKKRRKRAAASHTKQKQQQQQLVEQAAAAAEAHAAGCMMPLSVFN.

The segment at 1–29 is disordered; the sequence is MDMIGMASPAESPGGGGTARPSRYESQKR. The region spanning 23–150 is the ALOG domain; sequence RYESQKRRDW…ARGIAYEKKR (128 aa). The short motif at 148-152 is the Nuclear localization signal element; sequence KKRRK. A coiled-coil region spans residues 152 to 179; it reads KRAAASHTKQKQQQQQLVEQAAAAAEAH.

This sequence belongs to the plant homeotic and developmental regulators ALOG protein family.

The protein localises to the nucleus. Functionally, probable transcription regulator that acts as a developmental regulator by promoting cell growth in response to light. The sequence is that of Protein G1-like1 from Oryza sativa subsp. indica (Rice).